A 416-amino-acid polypeptide reads, in one-letter code: CinA-like protein (416 aa).

This sequence belongs to the CinA family.

The protein is CinA-like protein of Thermosynechococcus vestitus (strain NIES-2133 / IAM M-273 / BP-1).